Consider the following 196-residue polypeptide: MTDRTAAVTRETAETDVAVTLDLDGDGEHTVDTGIGFFDHMLAAFAKHGLFDVTVRCDGDLDVDDHHTVEDVGIALGAAFSEAVGEKRGIQRFADRRVPLDEAVASVVVDVSGRAVYEFDGGFSQPTVGGLTSRMAAHFWRTFATHAAVTLHCGVDGENAHHEIEALFKGVGRAVDDATRIDQRRAGETPSTKGDL.

It belongs to the imidazoleglycerol-phosphate dehydratase family.

It is found in the cytoplasm. The enzyme catalyses D-erythro-1-(imidazol-4-yl)glycerol 3-phosphate = 3-(imidazol-4-yl)-2-oxopropyl phosphate + H2O. It functions in the pathway amino-acid biosynthesis; L-histidine biosynthesis; L-histidine from 5-phospho-alpha-D-ribose 1-diphosphate: step 6/9. This is Imidazoleglycerol-phosphate dehydratase from Halobacterium salinarum (strain ATCC 700922 / JCM 11081 / NRC-1) (Halobacterium halobium).